The following is a 258-amino-acid chain: Tryptophan synthase alpha chain (258 aa).

Catalysis depends on proton acceptor residues glutamate 52 and aspartate 63.

This sequence belongs to the TrpA family. As to quaternary structure, tetramer of two alpha and two beta chains.

It catalyses the reaction (1S,2R)-1-C-(indol-3-yl)glycerol 3-phosphate + L-serine = D-glyceraldehyde 3-phosphate + L-tryptophan + H2O. Its pathway is amino-acid biosynthesis; L-tryptophan biosynthesis; L-tryptophan from chorismate: step 5/5. In terms of biological role, the alpha subunit is responsible for the aldol cleavage of indoleglycerol phosphate to indole and glyceraldehyde 3-phosphate. The chain is Tryptophan synthase alpha chain from Streptococcus pneumoniae (strain 70585).